A 301-amino-acid polypeptide reads, in one-letter code: uncharacterized protein (301 aa).

This is an uncharacterized protein from Escherichia coli (strain K12).